Reading from the N-terminus, the 312-residue chain is uncharacterized protein (312 aa).

This is an uncharacterized protein from Saccharomyces cerevisiae (strain ATCC 204508 / S288c) (Baker's yeast).